We begin with the raw amino-acid sequence, 456 residues long: tRNA(Ile)-lysidine synthase (456 aa).

ATP is bound at residue 27–32 (SGGVDS).

This sequence belongs to the tRNA(Ile)-lysidine synthase family.

It localises to the cytoplasm. It carries out the reaction cytidine(34) in tRNA(Ile2) + L-lysine + ATP = lysidine(34) in tRNA(Ile2) + AMP + diphosphate + H(+). In terms of biological role, ligates lysine onto the cytidine present at position 34 of the AUA codon-specific tRNA(Ile) that contains the anticodon CAU, in an ATP-dependent manner. Cytidine is converted to lysidine, thus changing the amino acid specificity of the tRNA from methionine to isoleucine. This Vibrio atlanticus (strain LGP32) (Vibrio splendidus (strain Mel32)) protein is tRNA(Ile)-lysidine synthase.